A 496-amino-acid polypeptide reads, in one-letter code: tRNA-2-methylthio-N(6)-dimethylallyladenosine synthase (496 aa).

One can recognise an MTTase N-terminal domain in the interval 10-126; sequence RTYEVRTYGC…LPALLERARV (117 aa). Positions 19, 55, 89, 163, 167, and 170 each coordinate [4Fe-4S] cluster. Positions 149–380 constitute a Radical SAM core domain; sequence RESAYAAWVS…ALVNEIAWEE (232 aa). Positions 382–451 constitute a TRAM domain; it reads KRLVGRRVEL…PHHLVADGPV (70 aa). Residues 465-496 are disordered; that stretch reads ARNAAPAPSSGVTLGMPTVGAPAPLPDAPACR. Pro residues predominate over residues 487–496; sequence APLPDAPACR.

Belongs to the methylthiotransferase family. MiaB subfamily. Monomer. Requires [4Fe-4S] cluster as cofactor.

The protein localises to the cytoplasm. It catalyses the reaction N(6)-dimethylallyladenosine(37) in tRNA + (sulfur carrier)-SH + AH2 + 2 S-adenosyl-L-methionine = 2-methylsulfanyl-N(6)-dimethylallyladenosine(37) in tRNA + (sulfur carrier)-H + 5'-deoxyadenosine + L-methionine + A + S-adenosyl-L-homocysteine + 2 H(+). Its function is as follows. Catalyzes the methylthiolation of N6-(dimethylallyl)adenosine (i(6)A), leading to the formation of 2-methylthio-N6-(dimethylallyl)adenosine (ms(2)i(6)A) at position 37 in tRNAs that read codons beginning with uridine. In Nocardioides sp. (strain ATCC BAA-499 / JS614), this protein is tRNA-2-methylthio-N(6)-dimethylallyladenosine synthase.